Here is a 488-residue protein sequence, read N- to C-terminus: UDP-N-acetylmuramoyl-L-alanyl-D-glutamate--2,6-diaminopimelate ligase (488 aa).

Residues Leu24, Ser26, and 41–43 (HQV) contribute to the UDP-N-acetyl-alpha-D-muramoyl-L-alanyl-D-glutamate site. Position 113–119 (113–119 (GTNGKTT)) interacts with ATP. Residues Asn154, 155-156 (TT), Ser182, Gln188, and Arg190 each bind UDP-N-acetyl-alpha-D-muramoyl-L-alanyl-D-glutamate. Lys222 carries the post-translational modification N6-carboxylysine. Meso-2,6-diaminopimelate is bound by residues Arg386, 410–413 (DNPR), Gly461, and Glu465. The short motif at 410–413 (DNPR) is the Meso-diaminopimelate recognition motif element.

The protein belongs to the MurCDEF family. MurE subfamily. The cofactor is Mg(2+). Carboxylation is probably crucial for Mg(2+) binding and, consequently, for the gamma-phosphate positioning of ATP.

The protein resides in the cytoplasm. It carries out the reaction UDP-N-acetyl-alpha-D-muramoyl-L-alanyl-D-glutamate + meso-2,6-diaminopimelate + ATP = UDP-N-acetyl-alpha-D-muramoyl-L-alanyl-gamma-D-glutamyl-meso-2,6-diaminopimelate + ADP + phosphate + H(+). It functions in the pathway cell wall biogenesis; peptidoglycan biosynthesis. Functionally, catalyzes the addition of meso-diaminopimelic acid to the nucleotide precursor UDP-N-acetylmuramoyl-L-alanyl-D-glutamate (UMAG) in the biosynthesis of bacterial cell-wall peptidoglycan. This is UDP-N-acetylmuramoyl-L-alanyl-D-glutamate--2,6-diaminopimelate ligase from Haemophilus influenzae (strain ATCC 51907 / DSM 11121 / KW20 / Rd).